Reading from the N-terminus, the 110-residue chain is HTH-type transcriptional regulator TnrA (110 aa).

Positions Val13–Lys81 constitute an HTH merR-type domain. Positions Ile16–Glu35 form a DNA-binding region, H-T-H motif.

In terms of assembly, homodimer. Under conditions of nitrogen excess, TnrA forms a stable complex with feedback-inhibited GlnA. Interacts with GlnK-AmtB complex.

It localises to the cell membrane. Under conditions of nitrogen excess, the DNA-binding activity is inhibited by the formation of a stable complex with feedback-inhibited GlnA. The presence of glutamine and AMP increases the inhibitory activity of glutamine synthetase by more than 1000-fold. Functionally, transcription regulator that actives the transcription of genes required for nitrogen assimilation such as nrgAB (ammonium transport), nasABCDEF (nitrate/nitrite assimilation), ureABC (urea degradation) and gabP (GABA transport), during nitrogen limitation. Also represses glnRA and gltAB in the absence of ammonium. On the contrary of the MerR members, which require longer DNA sites for high-affinity binding, TnrA requires a DNA sequence of 17 nucleotides as minimal binding site. This is HTH-type transcriptional regulator TnrA from Bacillus subtilis (strain 168).